A 314-amino-acid polypeptide reads, in one-letter code: Signal peptidase I (314 aa).

Residues 5 to 25 (LTIFLLISTLVTGIFWSFYCI) form a helical membrane-spanning segment. The Cytoplasmic segment spans residues 26 to 63 (KSFKNYLINKKIINNNNFHQEKIEKSKNKTYFLKSLAS). Residues 64–84 (FFPIFLAIFIIRSFIYEPFQI) traverse the membrane as a helical segment. Over 85–314 (PSGSMMPTLL…IRINRIGSIH (230 aa)) the chain is Extracellular. Residues serine 88 and lysine 143 contribute to the active site.

Belongs to the peptidase S26 family.

The protein resides in the cell membrane. It catalyses the reaction Cleavage of hydrophobic, N-terminal signal or leader sequences from secreted and periplasmic proteins.. This Buchnera aphidicola subsp. Acyrthosiphon pisum (strain APS) (Acyrthosiphon pisum symbiotic bacterium) protein is Signal peptidase I (lepB).